A 212-amino-acid polypeptide reads, in one-letter code: Leucyl/phenylalanyl-tRNA--protein transferase (212 aa).

The protein belongs to the L/F-transferase family.

It is found in the cytoplasm. It catalyses the reaction N-terminal L-lysyl-[protein] + L-leucyl-tRNA(Leu) = N-terminal L-leucyl-L-lysyl-[protein] + tRNA(Leu) + H(+). It carries out the reaction N-terminal L-arginyl-[protein] + L-leucyl-tRNA(Leu) = N-terminal L-leucyl-L-arginyl-[protein] + tRNA(Leu) + H(+). The enzyme catalyses L-phenylalanyl-tRNA(Phe) + an N-terminal L-alpha-aminoacyl-[protein] = an N-terminal L-phenylalanyl-L-alpha-aminoacyl-[protein] + tRNA(Phe). Its function is as follows. Functions in the N-end rule pathway of protein degradation where it conjugates Leu, Phe and, less efficiently, Met from aminoacyl-tRNAs to the N-termini of proteins containing an N-terminal arginine or lysine. The protein is Leucyl/phenylalanyl-tRNA--protein transferase of Allorhizobium ampelinum (strain ATCC BAA-846 / DSM 112012 / S4) (Agrobacterium vitis (strain S4)).